The sequence spans 160 residues: Ribosomal RNA large subunit methyltransferase H (160 aa).

S-adenosyl-L-methionine is bound by residues leucine 76, glycine 108, and 127–132; that span reads FGFMTW.

It belongs to the RNA methyltransferase RlmH family. Homodimer.

It localises to the cytoplasm. It catalyses the reaction pseudouridine(1915) in 23S rRNA + S-adenosyl-L-methionine = N(3)-methylpseudouridine(1915) in 23S rRNA + S-adenosyl-L-homocysteine + H(+). Specifically methylates the pseudouridine at position 1915 (m3Psi1915) in 23S rRNA. The protein is Ribosomal RNA large subunit methyltransferase H of Bartonella henselae (strain ATCC 49882 / DSM 28221 / CCUG 30454 / Houston 1) (Rochalimaea henselae).